Reading from the N-terminus, the 442-residue chain is Septin-8 (442 aa).

Over residues 1 to 16 (MAATDLERVSSAEPEP) the composition is skewed to basic and acidic residues. Positions 1 to 23 (MAATDLERVSSAEPEPRSLSLGG) are disordered. A2 carries the N-acetylalanine modification. S10 is modified (phosphoserine). In terms of domain architecture, Septin-type G spans 41 to 307 (QGFSFNILCV…ELYRRCKLEE (267 aa)). The segment at 51 to 58 (GETGIGKS) is G1 motif. GTP is bound by residues 51-58 (GETGIGKS), G106, 187-195 (KADTISKSE), G241, and R256. The segment at 103–106 (DAVG) is G3 motif. Residues 186-189 (AKAD) are G4 motif. Positions 322-410 (LQETYEAKRK…RKAAVEALQS (89 aa)) form a coiled coil. Over residues 377-391 (HQEEKRKVEEKRREL) the composition is skewed to basic and acidic residues. The interval 377–442 (HQEEKRKVEE…WSSIYSVTIP (66 aa)) is disordered. 2 stretches are compositionally biased toward polar residues: residues 408–420 (LQSQ…SQQP) and 432–442 (GWSSIYSVTIP).

Belongs to the TRAFAC class TrmE-Era-EngA-EngB-Septin-like GTPase superfamily. Septin GTPase family. Septins polymerize into heterooligomeric protein complexes that form filaments, and can associate with cellular membranes, actin filaments and microtubules. GTPase activity is required for filament formation. Interacts with CDK14, SEPTIN4, SEPTIN5 and SEPTIN7. Interacts with VAMP2; the interaction inhibits interaction of VAMP2 with SYP. Interacts with STX1A.

The protein localises to the cytoplasm. It localises to the cytoskeleton. Its subcellular location is the synapse. The protein resides in the cell projection. It is found in the axon. The protein localises to the cytoplasmic vesicle. It localises to the secretory vesicle. Its subcellular location is the synaptic vesicle membrane. The protein resides in the presynapse. In terms of biological role, filament-forming cytoskeletal GTPase. May play a role in platelet secretion. Seems to participate in the process of SNARE complex formation in synaptic vesicles. This Otolemur garnettii (Small-eared galago) protein is Septin-8.